Consider the following 432-residue polypeptide: Probable cysteine protease ATG4 (432 aa).

The interval 74 to 97 (SRDTQAALSKPATPPHQLGIQRSK) is disordered. Residue Cys-160 is the Nucleophile of the active site. Active-site residues include Asp-332 and His-334.

It belongs to the peptidase C54 family.

The protein localises to the cytoplasm. The protein resides in the nucleus. It is found in the preautophagosomal structure. It carries out the reaction [protein]-C-terminal L-amino acid-glycyl-phosphatidylethanolamide + H2O = [protein]-C-terminal L-amino acid-glycine + a 1,2-diacyl-sn-glycero-3-phosphoethanolamine. Cysteine protease that plays a key role in cytoplasm to vacuole transport (Cvt) and autophagy by mediating both proteolytic activation and delipidation of ATG8. Required for selective autophagic degradation of the nucleus (nucleophagy) as well as for mitophagy which contributes to regulate mitochondrial quantity and quality by eliminating the mitochondria to a basal level to fulfill cellular energy requirements and preventing excess ROS production. The protease activity is required for proteolytic activation of ATG8: cleaves the C-terminal amino acid of ATG8 to reveal a C-terminal glycine. ATG8 ubiquitin-like activity requires the exposure of the glycine at the C-terminus for its conjugation to phosphatidylethanolamine (PE) and its insertion to membranes, which is necessary for autophagy. The ATG8-PE conjugate mediates tethering between adjacent membranes and stimulates membrane hemifusion, leading to expansion of the autophagosomal membrane during autophagy. In addition to the protease activity, also catalyzes deconjugation of PE-conjugated forms of ATG8 during macroautophagy: ATG8 delipidation is required to release the protein from membranes, which facilitates multiple events during macroautophagy, and especially for efficient autophagosome biogenesis, the assembly of ATG9-containing tubulovesicular clusters into phagophores/autophagosomes, and for the disassembly of PAS-associated ATG components. ATG8 delipidation by ATG4 also recycles ATG8-PE generated on inappropriate membranes to maintain a reservoir of unlipidated ATG8 that is required for autophagosome formation at the PAS. This is Probable cysteine protease ATG4 (ATG4) from Coccidioides immitis (strain RS) (Valley fever fungus).